The following is a 325-amino-acid chain: uncharacterized protein (325 aa).

The interval 108–141 (PHRTQGISSTSSKSSKGGKKTPVRSTPKEIKKAT) is disordered.

This is an uncharacterized protein from Homo sapiens (Human).